A 55-amino-acid polypeptide reads, in one-letter code: Large ribosomal subunit protein bL33 (55 aa).

It belongs to the bacterial ribosomal protein bL33 family.

The protein is Large ribosomal subunit protein bL33 of Gluconacetobacter diazotrophicus (strain ATCC 49037 / DSM 5601 / CCUG 37298 / CIP 103539 / LMG 7603 / PAl5).